The chain runs to 484 residues: Sperm-associated antigen 8 (484 aa).

Over residues 1–11 (METSESTDRSQ) the composition is skewed to basic and acidic residues. Disordered stretches follow at residues 1–32 (METS…DPFS), 123–221 (DLSS…SAPV), and 324–348 (LQPQ…SHCQ). Composition is skewed to low complexity over residues 20–32 (SSDG…DPFS) and 125–160 (SSSR…SSSS). Residues 161–195 (GPGGSPGGSGRGPGHGPGPGGGSGQGPGGGSGQGT) show a composition bias toward gly residues. Residues 324 to 339 (LQPQSPTSSCTTQKDS) are compositionally biased toward polar residues. Mn stretches follow at residues 332–345 (SCTT…PPKS) and 384–398 (ESVT…LVQA). The interval 455 to 484 (PLPFEPESYSQHGEISSLACQGGGQGGGGG) is disordered. Positions 475-484 (QGGGQGGGGG) are enriched in gly residues.

This sequence belongs to the SPAG8 family. Microtubule inner protein component of sperm flagellar doublet microtubules. Interacts with FHL5 (via second LIM domain). Interacts with RANBP9. Expressed in trachea multiciliated cells.

The protein localises to the cytoplasm. Its subcellular location is the nucleus. The protein resides in the cytoplasmic vesicle. It localises to the secretory vesicle. It is found in the acrosome. The protein localises to the cytoskeleton. Its subcellular location is the microtubule organizing center. The protein resides in the spindle. It localises to the cilium axoneme. It is found in the flagellum axoneme. Functionally, microtubule inner protein (MIP) part of the dynein-decorated doublet microtubules (DMTs) in cilia axoneme, which is required for motile cilia beating. Plays a role in spermatogenesis by enhancing the binding of CREM isoform tau to its coactivator FHL5 and increasing the FHL5-regulated transcriptional activation of CREM isoform tau. Involved in the acrosome reaction and in binding of sperm to the zona pellucida. Plays a role in regulation of the cell cycle by controlling progression through the G2/M phase, possibly by delaying the activation of CDK1 which is required for entry into mitosis. May play a role in fertility and microtubule formation through interaction with RANBP9. The polypeptide is Sperm-associated antigen 8 (SPAG8) (Bos taurus (Bovine)).